Reading from the N-terminus, the 249-residue chain is Oxidoreductase asL5 (249 aa).

Residues I21, K45, N90, Y155, K159, I188, and T190 each contribute to the NADP(+) site. Y155 serves as the catalytic Proton acceptor. The active-site Lowers pKa of active site Tyr is K159.

It belongs to the short-chain dehydrogenases/reductases (SDR) family.

In terms of biological role, oxidoreductase; part of the gene cluster that mediates the biosynthesis of xenovulene A, an unusual meroterpenoid that has potent inhibitory effects on the human gamma-aminobutyrate A (GABAA) benzodiazepine receptor. The first step of xenovulene A biosynthesis is the biosynthesis of 3-methylorcinaldehyde performed by the non-reducing polyketide synthase aspks1. The salicylate hydroxylase asL1 then catalyzes the oxidative dearomatization of 3-methylorcinaldehyde to yield a dearomatized hydroxycyclohexadione. The 2-oxoglutarate-dependent dioxygenase asL3 further catalyzes the oxidative ring expansion to provide the first tropolone metabolite. The cytochrome P450 monooxygenase asR2 allows the synthesis of tropolone hemiacetal. In parallel, a previously unrecognised class of terpene cyclase, asR6, produces alpha-humulene from farnesylpyrophosphate (FPP). The putative Diels-Alderase asR5 probably catalyzes the formation of the tropolone-humulene skeleton by linking humulene and the polyketide moiety. Oxidative-ring contractions catalyzed by asL4 and asL6 then processively remove carbon atoms from the polyketide to yield xenovulene A. In Sarocladium schorii (Acremonium strictum (strain IMI 501407)), this protein is Oxidoreductase asL5.